The sequence spans 447 residues: Tektin-4 (447 aa).

Coiled-coil stretches lie at residues 322–348 and 375–423; these read LRKTLTEITDQEHQIAALKQAIKDKEA and FRLL…TNSL.

The protein belongs to the tektin family. In terms of assembly, microtubule inner protein component of sperm flagellar doublet microtubules. In terms of processing, ubiquitinated, leading to its degradation. Deubiquitinated by USP16, promoting its stability. Detected in testis, where it is weakly expressed in round spermatids, and strongly expressed in the flagellum of step 16 elongated spermatids (at protein level). Expressed in spermatozoa. In the sperm flagellum, localizes to the principal piece and midpiece (at protein level). Specifically expressed in testis; not detected in other tissues tested.

The protein localises to the cytoplasm. Its subcellular location is the cytoskeleton. It localises to the cilium axoneme. The protein resides in the flagellum axoneme. Microtubule inner protein (MIP) part of the dynein-decorated doublet microtubules (DMTs) in cilia and flagellar axoneme. Forms filamentous polymers in the walls of ciliary and flagellar microtubules. Contributes to normal sperm motility. This is Tektin-4 (Tekt4) from Mus musculus (Mouse).